Reading from the N-terminus, the 303-residue chain is Methionyl-tRNA formyltransferase (303 aa).

108–111 is a (6S)-5,6,7,8-tetrahydrofolate binding site; it reads SDLP.

The protein belongs to the Fmt family.

It carries out the reaction L-methionyl-tRNA(fMet) + (6R)-10-formyltetrahydrofolate = N-formyl-L-methionyl-tRNA(fMet) + (6S)-5,6,7,8-tetrahydrofolate + H(+). In terms of biological role, attaches a formyl group to the free amino group of methionyl-tRNA(fMet). The formyl group appears to play a dual role in the initiator identity of N-formylmethionyl-tRNA by promoting its recognition by IF2 and preventing the misappropriation of this tRNA by the elongation apparatus. This chain is Methionyl-tRNA formyltransferase, found in Rickettsia africae (strain ESF-5).